The primary structure comprises 210 residues: Thymidylate kinase (210 aa).

10 to 17 (GPEGAGKS) is a binding site for ATP.

This sequence belongs to the thymidylate kinase family.

The catalysed reaction is dTMP + ATP = dTDP + ADP. Its function is as follows. Phosphorylation of dTMP to form dTDP in both de novo and salvage pathways of dTTP synthesis. In Pseudomonas syringae pv. tomato (strain ATCC BAA-871 / DC3000), this protein is Thymidylate kinase.